The chain runs to 194 residues: Holliday junction branch migration complex subunit RuvA (194 aa).

The tract at residues 1 to 63 (MFEYLKGTVA…EDELSLYGFM (63 aa)) is domain I. The segment at 64-142 (SIEELDMFQK…KTNVVYDYTL (79 aa)) is domain II. Residues 143–151 (FNDDHKDDD) form a flexible linker region. Positions 151–194 (DEAVQALMALGYSKLESEKAVEAVRDMSLGTEDVIKRALKWLMK) are domain III.

Belongs to the RuvA family. Homotetramer. Forms an RuvA(8)-RuvB(12)-Holliday junction (HJ) complex. HJ DNA is sandwiched between 2 RuvA tetramers; dsDNA enters through RuvA and exits via RuvB. An RuvB hexamer assembles on each DNA strand where it exits the tetramer. Each RuvB hexamer is contacted by two RuvA subunits (via domain III) on 2 adjacent RuvB subunits; this complex drives branch migration. In the full resolvosome a probable DNA-RuvA(4)-RuvB(12)-RuvC(2) complex forms which resolves the HJ.

It is found in the cytoplasm. Its function is as follows. The RuvA-RuvB-RuvC complex processes Holliday junction (HJ) DNA during genetic recombination and DNA repair, while the RuvA-RuvB complex plays an important role in the rescue of blocked DNA replication forks via replication fork reversal (RFR). RuvA specifically binds to HJ cruciform DNA, conferring on it an open structure. The RuvB hexamer acts as an ATP-dependent pump, pulling dsDNA into and through the RuvAB complex. HJ branch migration allows RuvC to scan DNA until it finds its consensus sequence, where it cleaves and resolves the cruciform DNA. This is Holliday junction branch migration complex subunit RuvA from Alkaliphilus oremlandii (strain OhILAs) (Clostridium oremlandii (strain OhILAs)).